The primary structure comprises 1907 residues: Chromatin modification-related protein EAF1 B (1907 aa).

Disordered regions lie at residues 108–208, 261–287, 323–373, and 449–469; these read ASPH…TDLV, NRVSSNSLNTKVDGEPVVRESTAGSKT, GGSP…SHAN, and NQSHRSTAEMQTKEKSSETEK. Basic and acidic residues predominate over residues 140 to 151; it reads SENKSVEGERNL. Polar residues-rich tracts occupy residues 261–270, 333–342, and 355–372; these read NRVSSNSLNT, GQKNSSTQLN, and TNRGATGTNGLESESSHA. The 79-residue stretch at 563–641 folds into the HSA domain; that stretch reads CGTAPVEVRE…LSYAILQFWS (79 aa). 2 disordered regions span residues 836-909 and 928-952; these read SSSL…AVQK and AETSGKPKKKKKTHQGSAYDQTWHL. The segment covering 856 to 866 has biased composition (basic residues); it reads RRVRTASRHRV. Composition is skewed to polar residues over residues 884-898 and 942-952; these read TDASSGDTSSFQDEY and QGSAYDQTWHL. Residues 1049 to 1105 form the SANT domain; it reads SGNPWSLFEDQALVVLVHDMGPNWELISDAMNSTLKIKYIYRNPTECKDRHKILMDK. Disordered regions lie at residues 1107 to 1131, 1235 to 1266, 1296 to 1319, 1429 to 1465, 1477 to 1594, 1638 to 1703, 1767 to 1791, and 1824 to 1907; these read AGDGADSAEDSGNSQSYPSTLPGIP, PVLPTSGAHPSTPGSSGVVLSNNLPTTSGLQS, LSGRNLQQPSLSTPAAVSGSDRGH, GHLSQQHQMSPQSHVLGNSHHPHLQSPSQATGAQQEA, YLQQ…QQLN, VRPD…SPAT, VPQSVTNTTQTASMGTTKGMPQASN, and VNNS…TKVE. Polar residues-rich tracts occupy residues 1116–1125, 1242–1266, 1296–1310, 1431–1444, and 1453–1462; these read DSGNSQSYPS, AHPSTPGSSGVVLSNNLPTTSGLQS, LSGRNLQQPSLSTPA, LSQQHQMSPQSHVL, and QSPSQATGAQ. Over residues 1493-1512 the composition is skewed to low complexity; the sequence is PHVQQPQGSSVSSSSQNSPQ. Residues 1513 to 1529 are compositionally biased toward pro residues; it reads TQPPVSPQPLSMPPVSP. Composition is skewed to polar residues over residues 1532 to 1545, 1554 to 1568, 1585 to 1594, 1640 to 1655, 1662 to 1672, 1681 to 1703, 1769 to 1782, and 1824 to 1844; these read NINAMAQQKPQKSQ, SPQSGTSGVNNQAGK, RQPTQGQQLN, PDQQSSVGTTTSTDLQ, PLSSNHSQQLP, PSPQQQMQLHSDNSIQGQSSPAT, QSVTNTTQTASMGT, and VNNSNTDSAGNDPVSTPNQGL. 2 stretches are compositionally biased toward basic and acidic residues: residues 1863–1872 and 1882–1892; these read SEEKRPKLPE and LASEEQPHLEE.

This sequence belongs to the EAF1 family. As to quaternary structure, component of the NuA4 histone acetyltransferase complex. Interacts with ARP4 and SWC4, and (via HSA domain) with TAF14 and TAF14B. In terms of tissue distribution, expressed in leaves.

Its subcellular location is the nucleus. Functionally, component of the NuA4 histone acetyltransferase complex which is involved in transcriptional activation of selected genes principally by acetylation of nucleosomal histone H4 and H2A. This is Chromatin modification-related protein EAF1 B (EAF1B) from Arabidopsis thaliana (Mouse-ear cress).